A 678-amino-acid polypeptide reads, in one-letter code: Protein mono-ADP-ribosyltransferase PARP15 (678 aa).

Residues 1 to 19 (MAAPGPLPAAALSPGAPTP) show a composition bias toward low complexity. Residues 1 to 67 (MAAPGPLPAA…SSRSMSRDNK (67 aa)) form a disordered region. The span at 49–58 (GARKASRRSS) shows a compositional bias: basic residues. Macro domains are found at residues 78-267 (NVVA…TNWS) and 293-464 (CFTA…KKRD). Residues 312-313 (DI), 324-325 (ST), R331, V335, 409-413 (GTGNA), and Q449 contribute to the substrate site. Residues 482-678 (LPEHWTDMNH…YPEYLITFTA (197 aa)) enclose the PARP catalytic domain.

This sequence belongs to the ARTD/PARP family.

Its subcellular location is the nucleus. The catalysed reaction is L-aspartyl-[protein] + NAD(+) = 4-O-(ADP-D-ribosyl)-L-aspartyl-[protein] + nicotinamide. It carries out the reaction L-glutamyl-[protein] + NAD(+) = 5-O-(ADP-D-ribosyl)-L-glutamyl-[protein] + nicotinamide. Mono-ADP-ribosyltransferase that mediates mono-ADP-ribosylation of target proteins. Acts as a negative regulator of transcription. The protein is Protein mono-ADP-ribosyltransferase PARP15 of Homo sapiens (Human).